The chain runs to 682 residues: NAD(+)--arginine ADP-ribosyltransferase (682 aa).

The region spanning 383–614 (KIIRRELRGY…KLIQAEVMTT (232 aa)) is the TR mART core domain. Residues Arg478, Ser503, and Glu576 contribute to the active site.

The protein belongs to the Tevenvirinae NAD(+)--arginine ADP-ribosyltransferase family. In terms of processing, proteolytic cleavages at the N- and C-termini by the prohead core protein protease give rise to the mature enzyme.

It is found in the virion. It carries out the reaction L-arginyl-[protein] + NAD(+) = N(omega)-(ADP-D-ribosyl)-L-arginyl-[protein] + nicotinamide + H(+). Functionally, ADP-ribosyltransferase that efficiently ADP-ribosylates one of the two alpha subunits of host RNA polymerase RPOA on an arginine located in the C-terminal region. ADP-ribosylation of RPOA alpha subunit enhances the transcription of viral early genes. Also ribosylates RPOA subunits beta, beta' and sigma 70 and performs an autoribosylation reaction. Additional in-vitro identified targets include proteins involved in either translation or cellular metabolism such as elongation factor-Tu or GroeL. Mono-ADP-ribosylates host MAZF which may inactivate the latter. The polypeptide is NAD(+)--arginine ADP-ribosyltransferase (alt) (Escherichia coli (Bacteriophage T4)).